The following is a 335-amino-acid chain: Probable BOI-related E3 ubiquitin-protein ligase 3 (335 aa).

The interval 196-232 (LEEKVKSLCVENQIWRDVAQSNEATVNALRSNLQQVL) is WRD domain. The segment at 287 to 322 (CRSCGKGEASVLLLPCRHMCLCSVCGSSLNTCPICK) adopts an RING-type zinc-finger fold.

Interacts with the DELLA proteins GAI, RGA, RGL1, RGL2 and RGL3.

It carries out the reaction S-ubiquitinyl-[E2 ubiquitin-conjugating enzyme]-L-cysteine + [acceptor protein]-L-lysine = [E2 ubiquitin-conjugating enzyme]-L-cysteine + N(6)-ubiquitinyl-[acceptor protein]-L-lysine.. Its pathway is protein degradation; proteasomal ubiquitin-dependent pathway. In terms of biological role, probable E3 ubiquitin-protein ligase. Has no effect on the stability of the DELLA proteins. This Arabidopsis thaliana (Mouse-ear cress) protein is Probable BOI-related E3 ubiquitin-protein ligase 3 (BRG3).